We begin with the raw amino-acid sequence, 1603 residues long: MKSIIIASLVALAIAASPALDRTFSPKSEYVYKFDGLLLSGLPTTFSDASQTLISCRTRLQAVDDRYIHLQLIDIQYSASHIPQSEQWPKIESLEQRELSDELKELLELPFRAQIRNGLVSEIQFSSEDAEWSKNAKRSILNLFSLRKSAPVDEMSQDQKDMESDKDSLFFNVHEKTMEGDCEVAYTIVQEGGKTIYTKSVNFDKCITRPETAYGLRFGSECKECEKEGQFVQPQTVYTYTFKNEKLQESEVNSIYTLNVNGQEVVKSETRAKVTFVEESKINREIKKVSGPKEEIVYSMENEKLIEQFYKQGDKAEVNPFKAIEIEQKVEQLEEIFRQIQEHEQNTPETVHLIARAVRMFRMCTIEELKKVHTTIYTKAEKKVQLVIETTLAVAGTKNTIQHLIHHFEKKSITPLRAAELLKSVQETLYPSEHIADLLIQLAQSPLSEKYEPLRQSAWLAAGSVVRGFASKTQDLPLIRPASRQTKEKYVRVFMQHFRNADSTYEKVLALKTLGNAGIDLSVYELVQLIQDPRQPLSIRTEAVDALRLLKDVMPRKIQKVLLPVYKNRQNKPELRMAALWRMMHTIPEEPVLAHIVSQMENESNQHVAAFTYNVLRQFSKSTNPCYQQLAVRCSKVLLFTRYQPQEQMLSTYSQLPLFNSEWLSGVQFDFATIFEKNAFLPKEVQASFETVFGGNWNKYFAQVGFSQQNFEQVILKTLEKLSLYGKQSDELRSRRVQSGIQMLQEIVKKMNIRPRVQQTDSQNAHAVFYLRYKEMDYIVLPIDMETIDNVVEKYVRNGEFDIKSLLTFLTNDSKFELHRALFFYEAERRIPTTIGMPLTISGKMPTILSINGKVSIELEKLGARLVLDIVPTVATTHVTEMRFWYPVIEQGVKSLQSARLHTPLRFESTVELKKNTLEITHKFVVPENKKTTVSVHTRPVAFIRVPKNQDSEYVEAEEKTISHSQYQMSTEEIDRQYETFGLRINAQGNVLSQWTLPMVLMTEQDFEFTLENKNRPVEFTARVTIGNLEKTDLSEIKFDKIFEKEFDLENNESENRRQYFHKMIREIQSEQGFKNLITLKLEAPQQMYWNTELRTVCDKWIRMCKVEMDARRSPIEHENKEWTLRTELLAARPQMPSSLRQLREQPHREVQLALNAKWGSSKKSEITFNAQLEQSTEQKKFLRNIEREYKGIPEYELLIKAARLNQVNVVSEYKLTPESEYTFSRIFDLIKAYNFWTVSEKRVQNEDRRVVLQLSVEPLSRQYMNMTIQTPEQEVELKNVRIPRVVLPTIARRAMFQQTWEKTGATCKVDQSEVSTFDNVIYRAPLTTCYSLVAKDCSEQPRFAVLAKKINKNSEELLVKVVRREEEIVVKKSDDKFLVKVDGKKVNPTELEQYNIEILGDNLIVIRLPHGEVRFDGYTVKTNMPSVASQNQLCGLCGNNDGERDNEFMTADNYETEDVEEFHRSYLLKNEECEVEKDRISEKKNYKNKWNREEKKSDYESSSDYESNYDEKETEKELVKKTLIKEFSNRVCFSIEPVSECRRGLESEKTSNKKIRFTCMPRHSKNARRFLKEAREQTVADLVDFPVSFVESVKIPTACVAY.

Positions 1 to 15 (MKSIIIASLVALAIA) are cleaved as a signal peptide. One can recognise a Vitellogenin domain in the interval 24-685 (FSPKSEYVYK…EKNAFLPKEV (662 aa)). Asn1266 carries N-linked (GlcNAc...) asparagine glycosylation. In terms of domain architecture, VWFD spans 1306 to 1475 (ATCKVDQSEV…SYLLKNEECE (170 aa)). 2 cysteine pairs are disulfide-bonded: Cys1308-Cys1438 and Cys1330-Cys1474.

As to expression, expressed in the intestine of adult hermaphrodites.

It is found in the secreted. In terms of biological role, precursor of the egg-yolk proteins that are sources of nutrients during embryonic development. Together with other vitellogenins, may play a role in modulating life-span, acting via induction of autophagy and lysosomal lipolysis. This is Vitellogenin-4 (vit-4) from Caenorhabditis elegans.